The following is a 355-amino-acid chain: Serum paraoxonase/arylesterase 1 (355 aa).

Cysteine 42 and cysteine 353 form a disulfide bridge. Ca(2+)-binding residues include glutamate 53 and aspartate 54. Histidine 115 functions as the Proton acceptor in the catalytic mechanism. Residues isoleucine 117, asparagine 168, aspartate 169, and asparagine 224 each coordinate Ca(2+). Asparagine 253 carries N-linked (GlcNAc...) asparagine glycosylation. Positions 269 and 270 each coordinate Ca(2+). N-linked (GlcNAc...) asparagine glycosylation is found at asparagine 270 and asparagine 324.

The protein belongs to the paraoxonase family. Homodimer. Interacts with CLU. The cofactor is Ca(2+). Post-translationally, glycosylated. In terms of processing, the signal sequence is not cleaved. As to expression, plasma. Associated with HDL.

It localises to the secreted. Its subcellular location is the extracellular space. The catalysed reaction is a phenyl acetate + H2O = a phenol + acetate + H(+). The enzyme catalyses An aryl dialkyl phosphate + H2O = dialkyl phosphate + an aryl alcohol.. It carries out the reaction an N-acyl-L-homoserine lactone + H2O = an N-acyl-L-homoserine + H(+). Its function is as follows. Hydrolyzes the toxic metabolites of a variety of organophosphorus insecticides. Capable of hydrolyzing a broad spectrum of organophosphate substrates and lactones, and a number of aromatic carboxylic acid esters. Mediates an enzymatic protection of low density lipoproteins against oxidative modification. This is Serum paraoxonase/arylesterase 1 (Pon1) from Rattus norvegicus (Rat).